Consider the following 80-residue polypeptide: Acyl carrier protein (80 aa).

The 76-residue stretch at 2-77 (SDIEQRVKKI…QAIDYAKAHV (76 aa)) folds into the Carrier domain. Position 37 is an O-(pantetheine 4'-phosphoryl)serine (Ser-37).

Belongs to the acyl carrier protein (ACP) family. Post-translationally, 4'-phosphopantetheine is transferred from CoA to a specific serine of apo-ACP by AcpS. This modification is essential for activity because fatty acids are bound in thioester linkage to the sulfhydryl of the prosthetic group.

Its subcellular location is the cytoplasm. It functions in the pathway lipid metabolism; fatty acid biosynthesis. Its function is as follows. Carrier of the growing fatty acid chain in fatty acid biosynthesis. This is Acyl carrier protein from Herminiimonas arsenicoxydans.